Here is a 65-residue protein sequence, read N- to C-terminus: Large ribosomal subunit protein bL35 (65 aa).

The tract at residues 1–28 is disordered; sequence MPKLKTRKAAARRFKATGSGKIKRRKAF.

The protein belongs to the bacterial ribosomal protein bL35 family.

This is Large ribosomal subunit protein bL35 from Trichodesmium erythraeum (strain IMS101).